The chain runs to 505 residues: MFS-type transporter oryN (505 aa).

The interval 1–54 (MAVAELPNIVSTDSSPSPHPGSRLSSEPTDIESQKAPSNAEPKTDPNLVTWDGP) is disordered. The next 13 membrane-spanning stretches (helical) occupy residues 69 to 89 (AFVT…SSIF), 106 to 126 (VVTL…PVWG), 135 to 155 (KWPM…VAVA), 166 to 186 (FLTG…LVDM), 193 to 213 (GVAM…APLM), 226 to 246 (FTQW…VFGL), 280 to 300 (GIKD…VTEP), 301 to 321 (ILLL…LVFV), 337 to 357 (ISAL…AIVV), 376 to 396 (LPLM…FAWT), 401 to 421 (IHWA…YMVF), 440 to 460 (IGAN…FGPF), and 468 to 488 (AWAS…PVLF).

It belongs to the major facilitator superfamily. CAR1 family.

Its subcellular location is the membrane. Functionally, MFS-type transporter; part of the gene cluster that mediates the biosynthesis of oryzines, natural products with an unusual maleidride backbone. In Aspergillus oryzae (strain ATCC 42149 / RIB 40) (Yellow koji mold), this protein is MFS-type transporter oryN.